A 76-amino-acid chain; its full sequence is Protein RALF-like 30 (76 aa).

The first 22 residues, 1–22 (MKAWVICLMVISIFMMIEPTLA), serve as a signal peptide directing secretion. 2 cysteine pairs are disulfide-bonded: Cys37–Cys46 and Cys66–Cys72.

The protein belongs to the plant rapid alkalinization factor (RALF) family.

It is found in the secreted. Functionally, cell signaling peptide that may regulate plant stress, growth, and development. Mediates a rapid alkalinization of extracellular space by mediating a transient increase in the cytoplasmic Ca(2+) concentration leading to a calcium-dependent signaling events through a cell surface receptor and a concomitant activation of some intracellular mitogen-activated protein kinases. This Arabidopsis thaliana (Mouse-ear cress) protein is Protein RALF-like 30 (RALFL30).